Consider the following 253-residue polypeptide: GTP cyclohydrolase III (253 aa).

Belongs to the archaeal-type GTP cyclohydrolase family.

The enzyme catalyses GTP + 3 H2O = 2-amino-5-formylamino-6-(5-phospho-D-ribosylamino)pyrimidin-4(3H)-one + 2 phosphate + 2 H(+). Its function is as follows. Catalyzes the formation of 2-amino-5-formylamino-6-ribofuranosylamino-4(3H)-pyrimidinone ribonucleotide monophosphate and inorganic phosphate from GTP. Also has an independent pyrophosphate phosphohydrolase activity. The polypeptide is GTP cyclohydrolase III (Natronomonas pharaonis (strain ATCC 35678 / DSM 2160 / CIP 103997 / JCM 8858 / NBRC 14720 / NCIMB 2260 / Gabara) (Halobacterium pharaonis)).